The primary structure comprises 689 residues: DNA ligase (689 aa).

Residues 40 to 44 (DSEYD), 89 to 90 (SL), and Glu-121 contribute to the NAD(+) site. Lys-123 functions as the N6-AMP-lysine intermediate in the catalytic mechanism. Arg-144, Glu-179, Lys-295, and Lys-319 together coordinate NAD(+). 4 residues coordinate Zn(2+): Cys-413, Cys-416, Cys-431, and Cys-437. The 80-residue stretch at 610–689 (REQSGLTDKI…EEWLTLIKNV (80 aa)) folds into the BRCT domain.

It belongs to the NAD-dependent DNA ligase family. LigA subfamily. Mg(2+) serves as cofactor. Requires Mn(2+) as cofactor.

The enzyme catalyses NAD(+) + (deoxyribonucleotide)n-3'-hydroxyl + 5'-phospho-(deoxyribonucleotide)m = (deoxyribonucleotide)n+m + AMP + beta-nicotinamide D-nucleotide.. DNA ligase that catalyzes the formation of phosphodiester linkages between 5'-phosphoryl and 3'-hydroxyl groups in double-stranded DNA using NAD as a coenzyme and as the energy source for the reaction. It is essential for DNA replication and repair of damaged DNA. The sequence is that of DNA ligase from Rickettsia conorii (strain ATCC VR-613 / Malish 7).